Consider the following 434-residue polypeptide: Beta-enolase (434 aa).

At Ala-2 the chain carries N-acetylalanine. Thr-72 is modified (phosphothreonine). Residues Ser-83 and Ser-157 each carry the phosphoserine modification. 2 residues coordinate substrate: His-158 and Glu-167. A Phosphoserine modification is found at Ser-176. Position 205 is a phosphothreonine (Thr-205). Glu-210 functions as the Proton donor in the catalytic mechanism. Position 229 is a phosphothreonine (Thr-229). Phosphotyrosine is present on Tyr-236. A Mg(2+)-binding site is contributed by Asp-245. Residue Ser-263 is modified to Phosphoserine. Positions 293 and 318 each coordinate substrate. Mg(2+) contacts are provided by Glu-293 and Asp-318. Lys-343 serves as the catalytic Proton acceptor. Residues 370–373 (SHRS) and Lys-394 each bind substrate.

It belongs to the enolase family. Mammalian enolase is composed of 3 isozyme subunits, alpha, beta and gamma, which can form homodimers or heterodimers which are cell-type and development-specific. Interacts with PNKD. Mg(2+) serves as cofactor. The alpha/alpha homodimer is expressed in embryo and in most adult tissues. The alpha/beta heterodimer and the beta/beta homodimer are found in striated muscle, and the alpha/gamma heterodimer and the gamma/gamma homodimer in neurons.

It localises to the cytoplasm. The enzyme catalyses (2R)-2-phosphoglycerate = phosphoenolpyruvate + H2O. It participates in carbohydrate degradation; glycolysis; pyruvate from D-glyceraldehyde 3-phosphate: step 4/5. Functionally, glycolytic enzyme that catalyzes the conversion of 2-phosphoglycerate to phosphoenolpyruvate. Appears to have a function in striated muscle development and regeneration. The polypeptide is Beta-enolase (ENO3) (Homo sapiens (Human)).